The sequence spans 186 residues: ATP-dependent protease subunit HslV (186 aa).

Threonine 14 is a catalytic residue. Positions 168, 171, and 174 each coordinate Na(+).

This sequence belongs to the peptidase T1B family. HslV subfamily. In terms of assembly, a double ring-shaped homohexamer of HslV is capped on each side by a ring-shaped HslU homohexamer. The assembly of the HslU/HslV complex is dependent on binding of ATP.

It is found in the cytoplasm. The enzyme catalyses ATP-dependent cleavage of peptide bonds with broad specificity.. Its activity is regulated as follows. Allosterically activated by HslU binding. Functionally, protease subunit of a proteasome-like degradation complex believed to be a general protein degrading machinery. The chain is ATP-dependent protease subunit HslV from Bradyrhizobium sp. (strain BTAi1 / ATCC BAA-1182).